The primary structure comprises 457 residues: Multidrug resistance protein MdtK (457 aa).

12 helical membrane passes run 11–31, 53–73, 93–113, 127–147, 159–179, 190–210, 249–269, 276–296, 313–333, 357–377, 387–407, and 417–437; these read LSAL…MGVV, IWLP…PVVA, FLAA…EYAI, AIGY…YQVL, PGMM…YIFI, GVGC…LMML, LLFE…LGVV, IALN…VATT, IAAH…AIFT, LMLL…GTGV, IFYI…YLLA, and GPAG…VMMV.

It belongs to the multi antimicrobial extrusion (MATE) (TC 2.A.66.1) family. MdtK subfamily.

It is found in the cell inner membrane. Functionally, multidrug efflux pump that functions probably as a Na(+)/drug antiporter. The protein is Multidrug resistance protein MdtK of Pectobacterium atrosepticum (strain SCRI 1043 / ATCC BAA-672) (Erwinia carotovora subsp. atroseptica).